The sequence spans 805 residues: Na(+)/H(+) antiporter subunit A1 (805 aa).

20 consecutive transmembrane segments (helical) span residues 1 to 21 (MSLL…IPFV), 30 to 50 (LGWF…SYIS), 79 to 99 (LGLL…LYSI), 117 to 137 (LFMG…LYLF), 166 to 186 (MLVT…LSIA), 201 to 221 (EIQT…GAMT), 226 to 246 (FPFY…SAYL), 265 to 285 (IFAV…ITLF), 300 to 320 (ILAF…GVGA), 337 to 357 (FTAA…LFMI), 377 to 397 (LTIM…MAGI), 427 to 447 (LGIL…VYSI), 480 to 500 (ILAI…GSII), 531 to 551 (LGIY…IYLL), 591 to 611 (LVII…VTPF), 623 to 643 (PFEL…IFAK), 646 to 666 (LFSI…FIFF), 671 to 691 (LALT…LCFY), 707 to 727 (LVNI…GLIA), and 766 to 786 (TLFE…MIKL).

Belongs to the CPA3 antiporters (TC 2.A.63) subunit A family. May form a heterooligomeric complex that consists of seven subunits: mnhA1, mnhB1, mnhC1, mnhD1, mnhE1, mnhF1 and mnhG1.

The protein resides in the cell membrane. In terms of biological role, mnh complex is a Na(+)/H(+) antiporter involved in Na(+) excretion. The protein is Na(+)/H(+) antiporter subunit A1 (mnhA1) of Staphylococcus saprophyticus subsp. saprophyticus (strain ATCC 15305 / DSM 20229 / NCIMB 8711 / NCTC 7292 / S-41).